A 417-amino-acid polypeptide reads, in one-letter code: Probable serine/threonine-protein kinase WNK9 (417 aa).

Residues 1–23 form a disordered region; sequence MDLVEAEAEEQPPDEDGDEEGYV. A Protein kinase domain is found at 32-289; the sequence is IRYDEIVGSG…ATELLKSSFL (258 aa). ATP is bound by residues 113–116 and lysine 163; that span reads TELF. Catalysis depends on aspartate 180, which acts as the Proton acceptor.

It belongs to the protein kinase superfamily. Ser/Thr protein kinase family. WNK subfamily.

The enzyme catalyses L-seryl-[protein] + ATP = O-phospho-L-seryl-[protein] + ADP + H(+). It carries out the reaction L-threonyl-[protein] + ATP = O-phospho-L-threonyl-[protein] + ADP + H(+). The protein is Probable serine/threonine-protein kinase WNK9 (WNK9) of Oryza sativa subsp. japonica (Rice).